The chain runs to 453 residues: Ankyrin repeat and SOCS box protein 16 (453 aa).

ANK repeat units lie at residues 56 to 85, 110 to 139, 142 to 171, 175 to 204, 209 to 238, 242 to 279, and 283 to 312; these read CRDP…AANM, KQTA…ELDA, GGRA…KANV, EGMT…SVNV, SEVT…DVAL, QGET…DPQA, and KRHT…SPGV. The region spanning 397 to 453 is the SOCS box domain; that stretch reads FYSSALSMENQPRQLQHLARLAVRAQLGSHCRQAAAQLPLPPLLRDYLLLGVEGRIQ.

It belongs to the ankyrin SOCS box (ASB) family.

The protein operates within protein modification; protein ubiquitination. May be a substrate-recognition component of a SCF-like ECS (Elongin-Cullin-SOCS-box protein) E3 ubiquitin-protein ligase complex which mediates the ubiquitination and subsequent proteasomal degradation of target proteins. The protein is Ankyrin repeat and SOCS box protein 16 (Asb16) of Mus musculus (Mouse).